The primary structure comprises 559 residues: T-complex protein 1 subunit gamma (559 aa).

C369 and C375 are joined by a disulfide. The segment at 537–559 (GGASVTDGNGQEIPETFGDARDG) is disordered.

It belongs to the TCP-1 chaperonin family. Heterooligomeric complex of about 850 to 900 kDa that forms two stacked rings, 12 to 16 nm in diameter.

It is found in the cytoplasm. Molecular chaperone; assists the folding of proteins upon ATP hydrolysis. Known to play a role, in vitro, in the folding of actin and tubulin. The sequence is that of T-complex protein 1 subunit gamma from Tetrahymena pyriformis.